The primary structure comprises 150 residues: Large ribosomal subunit protein bL9 (150 aa).

The protein belongs to the bacterial ribosomal protein bL9 family.

Functionally, binds to the 23S rRNA. The sequence is that of Large ribosomal subunit protein bL9 from Burkholderia cenocepacia (strain HI2424).